The following is a 173-amino-acid chain: ATP synthase subunit d, mitochondrial (173 aa).

The transit peptide at 1-23 (MAARSAALKIDWVKVTSSLGLRG) directs the protein to the mitochondrion.

This sequence belongs to the ATPase d subunit family. As to quaternary structure, F-type ATPases have 2 components, CF(1) - the catalytic core - and CF(0) - the membrane proton channel. In yeast, the dimeric form of ATP synthase consists of 17 polypeptides: alpha, beta, gamma, delta, epsilon, 4 (B), 5 (OSCP), 6 (A), 8, 9 (C), d, E (Tim11), f, g, h, i/j and k.

Its subcellular location is the mitochondrion inner membrane. In terms of biological role, mitochondrial membrane ATP synthase (F(1)F(0) ATP synthase or Complex V) produces ATP from ADP in the presence of a proton gradient across the membrane which is generated by electron transport complexes of the respiratory chain. F-type ATPases consist of two structural domains, F(1) - containing the extramembraneous catalytic core, and F(0) - containing the membrane proton channel, linked together by a central stalk and a peripheral stalk. During catalysis, ATP synthesis in the catalytic domain of F(1) is coupled via a rotary mechanism of the central stalk subunits to proton translocation. Part of the complex F(0) domain and the peripheric stalk, which acts as a stator to hold the catalytic alpha(3)beta(3) subcomplex and subunit a/ATP6 static relative to the rotary elements. The protein is ATP synthase subunit d, mitochondrial (atp7) of Aspergillus terreus (strain NIH 2624 / FGSC A1156).